A 279-amino-acid chain; its full sequence is Large ribosomal subunit protein uL2 (279 aa).

Disordered regions lie at residues 34–58 (LRPLHKTGGRNNTGRITTRHKGGGH) and 225–279 (VMNP…KNKR). Over residues 251–268 (GKPEGRTRRPNKESDKLI) the composition is skewed to basic and acidic residues. Positions 269–279 (VRRRRTGKNKR) are enriched in basic residues.

It belongs to the universal ribosomal protein uL2 family. Part of the 50S ribosomal subunit. Forms a bridge to the 30S subunit in the 70S ribosome.

One of the primary rRNA binding proteins. Required for association of the 30S and 50S subunits to form the 70S ribosome, for tRNA binding and peptide bond formation. It has been suggested to have peptidyltransferase activity; this is somewhat controversial. Makes several contacts with the 16S rRNA in the 70S ribosome. In Micrococcus luteus (strain ATCC 4698 / DSM 20030 / JCM 1464 / CCM 169 / CCUG 5858 / IAM 1056 / NBRC 3333 / NCIMB 9278 / NCTC 2665 / VKM Ac-2230) (Micrococcus lysodeikticus), this protein is Large ribosomal subunit protein uL2.